We begin with the raw amino-acid sequence, 204 residues long: Guanylate kinase (204 aa).

One can recognise a Guanylate kinase-like domain in the interval 5-184; the sequence is GLLIVLSGPS…AVQRIKDIIA (180 aa). 12–19 contributes to the ATP binding site; it reads GPSGVGKG.

Belongs to the guanylate kinase family.

The protein localises to the cytoplasm. It carries out the reaction GMP + ATP = GDP + ADP. In terms of biological role, essential for recycling GMP and indirectly, cGMP. The polypeptide is Guanylate kinase (Enterococcus faecalis (strain ATCC 700802 / V583)).